Consider the following 102-residue polypeptide: Small ribosomal subunit protein uS10 (102 aa).

Belongs to the universal ribosomal protein uS10 family. In terms of assembly, part of the 30S ribosomal subunit.

Functionally, involved in the binding of tRNA to the ribosomes. This Clostridium beijerinckii (strain ATCC 51743 / NCIMB 8052) (Clostridium acetobutylicum) protein is Small ribosomal subunit protein uS10.